A 520-amino-acid chain; its full sequence is Ubiquitin carboxyl-terminal hydrolase MINDY-1 (520 aa).

Positions Met-1–Met-155 are disordered. Basic and acidic residues predominate over residues Lys-26–Lys-37. Positions Thr-43–Lys-54 are enriched in polar residues. Residues Ala-77–Lys-86 are compositionally biased toward low complexity. Polar residues-rich tracts occupy residues Val-93–Met-112 and Ser-132–Glu-146. Cys-189 (nucleophile) is an active-site residue. His-371 functions as the Proton acceptor in the catalytic mechanism. Disordered regions lie at residues Ser-422 to Gln-441 and Glu-467 to Leu-520. The segment at Gln-441–Gln-479 is ubiquitin-binding domain (UBD). Over residues Ala-469–Gln-498 the composition is skewed to low complexity. Residues Lys-511–Leu-520 are compositionally biased toward basic and acidic residues.

It belongs to the MINDY deubiquitinase family. FAM63 subfamily.

The enzyme catalyses Thiol-dependent hydrolysis of ester, thioester, amide, peptide and isopeptide bonds formed by the C-terminal Gly of ubiquitin (a 76-residue protein attached to proteins as an intracellular targeting signal).. Its function is as follows. Hydrolase that can specifically remove 'Lys-48'-linked conjugated ubiquitin from proteins. May play a regulatory role at the level of protein turnover. The polypeptide is Ubiquitin carboxyl-terminal hydrolase MINDY-1 (mindy1) (Danio rerio (Zebrafish)).